Here is a 306-residue protein sequence, read N- to C-terminus: Glutaminase (306 aa).

Serine 64, asparagine 115, glutamate 159, asparagine 166, tyrosine 190, tyrosine 242, and valine 260 together coordinate substrate.

It belongs to the glutaminase family. In terms of assembly, homotetramer.

The catalysed reaction is L-glutamine + H2O = L-glutamate + NH4(+). This is Glutaminase from Photobacterium profundum (strain SS9).